A 139-amino-acid polypeptide reads, in one-letter code: Ribulose bisphosphate carboxylase small subunit (139 aa).

This sequence belongs to the RuBisCO small chain family. In terms of assembly, heterohexadecamer of 8 large and 8 small subunits.

It localises to the plastid. The protein resides in the chloroplast. Functionally, ruBisCO catalyzes two reactions: the carboxylation of D-ribulose 1,5-bisphosphate, the primary event in carbon dioxide fixation, as well as the oxidative fragmentation of the pentose substrate in the photorespiration process. Both reactions occur simultaneously and in competition at the same active site. Although the small subunit is not catalytic it is essential for maximal activity. The polypeptide is Ribulose bisphosphate carboxylase small subunit (Chrysotila carterae (Marine alga)).